Here is a 354-residue protein sequence, read N- to C-terminus: tRNA-specific 2-thiouridylase MnmA (354 aa).

ATP is bound by residues 7 to 14 (AMSGGVDS) and methionine 33. Cysteine 94 (nucleophile) is an active-site residue. Cysteine 94 and cysteine 192 are disulfide-bonded. Glycine 118 contacts ATP. The tract at residues 141 to 143 (KDQ) is interaction with tRNA. Cysteine 192 acts as the Cysteine persulfide intermediate in catalysis. Positions 296–297 (RY) are interaction with tRNA.

The protein belongs to the MnmA/TRMU family.

It is found in the cytoplasm. The enzyme catalyses S-sulfanyl-L-cysteinyl-[protein] + uridine(34) in tRNA + AH2 + ATP = 2-thiouridine(34) in tRNA + L-cysteinyl-[protein] + A + AMP + diphosphate + H(+). In terms of biological role, catalyzes the 2-thiolation of uridine at the wobble position (U34) of tRNA, leading to the formation of s(2)U34. This is tRNA-specific 2-thiouridylase MnmA from Trichlorobacter lovleyi (strain ATCC BAA-1151 / DSM 17278 / SZ) (Geobacter lovleyi).